The chain runs to 112 residues: UPF0102 protein Pmob_0702 (112 aa).

The protein belongs to the UPF0102 family.

This Petrotoga mobilis (strain DSM 10674 / SJ95) protein is UPF0102 protein Pmob_0702.